Reading from the N-terminus, the 201-residue chain is Sorting nexin-10 (201 aa).

The interval 8-125 (EEFVSVWVRD…SLHLFLQSHL (118 aa)) is required for interaction with ATP6V1D. The 118-residue stretch at 10 to 127 (FVSVWVRDPR…HLFLQSHLNS (118 aa)) folds into the PX domain. Residues R53, K79, and R94 each contribute to the a 1,2-diacyl-sn-glycero-3-phospho-(1D-myo-inositol-3-phosphate) site. Residues 156 to 201 (FPEEDEEGKKENDIDYDSESSSSGLGHSSDDSSSHGCKVNTAPQES) are disordered.

Belongs to the sorting nexin family. As to quaternary structure, interacts with ATP6V1D; may play a role in ciliogenesis.

The protein resides in the cytoplasm. The protein localises to the endosome membrane. Its subcellular location is the cytoskeleton. It localises to the microtubule organizing center. It is found in the centrosome. In terms of biological role, probable phosphoinositide-binding protein involved in protein sorting and membrane trafficking in endosomes. Plays a role in cilium biogenesis through regulation of the transport and the localization of proteins to the cilium. Required for the localization to the cilium of V-ATPase subunit ATP6V1D and ATP6V0D1, and RAB8A. Involved in osteoclast differentiation and therefore bone resorption. The polypeptide is Sorting nexin-10 (SNX10) (Homo sapiens (Human)).